Consider the following 508-residue polypeptide: MAEPVLTIHGVTKHFGAVKALRDVDFTLERGEVHALCGENGAGKSTLMNIIAGVLQPTEGEIRVDGKAVRISSPAAAQYLGIGLVHQEIALCPDATVAENMFMAATNRRRAPLMNYRRLERDAQAVMNRLAAIDVRRRVADLPISSQQLVEIAKALTLDCRVLILDEPTAALTETEAQQLFSIIRDLKANGISIIYISHRMAEIFSLCDRVTVFRDGRYVCTDRLADLTPDDVVRRMVGREITQLYPDKLGADERSGGIILEVDGISDGARFHDVTFGLRKGEILGIGGLIGSGRTEIAEGICGLRPRTAGTVRLHGAAQPIRAYSDAVKAGIVYLSEDRKGSGIFLEMSIAQNISVLDLKALTNAVGLLNGRAEAALADDFARRLAVRMSGIEAPVKSLSGGNQQKVAIAKQLAVKPKVILMDEPTRGIDVGAKAEIHRVLRELASAGIGIIVISSEMPELLGLSDRLLVVREGRIAGELSADEMSEEAVIRLASGMGSARAADHAA.

ABC transporter domains follow at residues 6 to 241 (LTIH…VGRE) and 254 to 499 (ERSG…SGMG). 38–45 (GENGAGKS) is an ATP binding site.

It belongs to the ABC transporter superfamily. Ribose importer (TC 3.A.1.2.1) family. In terms of assembly, the complex is composed of an ATP-binding protein (RbsA), two transmembrane proteins (RbsC) and a solute-binding protein (RbsB).

It is found in the cell inner membrane. It catalyses the reaction D-ribose(out) + ATP + H2O = D-ribose(in) + ADP + phosphate + H(+). Part of the ABC transporter complex RbsABC involved in ribose import. Responsible for energy coupling to the transport system. In Rhizobium etli (strain ATCC 51251 / DSM 11541 / JCM 21823 / NBRC 15573 / CFN 42), this protein is Ribose import ATP-binding protein RbsA 2.